Here is a 132-residue protein sequence, read N- to C-terminus: Large ribosomal subunit protein uL24 (132 aa).

Belongs to the universal ribosomal protein uL24 family. As to quaternary structure, part of the 50S ribosomal subunit.

One of two assembly initiator proteins, it binds directly to the 5'-end of the 23S rRNA, where it nucleates assembly of the 50S subunit. In terms of biological role, located at the polypeptide exit tunnel on the outside of the subunit. The protein is Large ribosomal subunit protein uL24 of Aeropyrum pernix (strain ATCC 700893 / DSM 11879 / JCM 9820 / NBRC 100138 / K1).